The sequence spans 288 residues: Diaminopimelate epimerase (288 aa).

The substrate site is built by Asn-13, Gln-51, and Asn-71. Cys-80 acts as the Proton donor in catalysis. Substrate-binding positions include Gly-81 to Asn-82, Asn-166, Asn-200, and Glu-218 to Arg-219. Cys-227 functions as the Proton acceptor in the catalytic mechanism. Residue Gly-228 to Thr-229 coordinates substrate.

The protein belongs to the diaminopimelate epimerase family. As to quaternary structure, homodimer.

It is found in the cytoplasm. It catalyses the reaction (2S,6S)-2,6-diaminopimelate = meso-2,6-diaminopimelate. Its pathway is amino-acid biosynthesis; L-lysine biosynthesis via DAP pathway; DL-2,6-diaminopimelate from LL-2,6-diaminopimelate: step 1/1. Its function is as follows. Catalyzes the stereoinversion of LL-2,6-diaminopimelate (L,L-DAP) to meso-diaminopimelate (meso-DAP), a precursor of L-lysine and an essential component of the bacterial peptidoglycan. The sequence is that of Diaminopimelate epimerase from Caulobacter vibrioides (strain ATCC 19089 / CIP 103742 / CB 15) (Caulobacter crescentus).